The sequence spans 311 residues: Olfactory receptor 1L4 (311 aa).

Topologically, residues 1–26 (METKNYSSSTSGFILLGLSSNPKLQK) are extracellular. An N-linked (GlcNAc...) asparagine glycan is attached at Asn-5. Residues 27–50 (PLFAIFLIMYLLTAVGNVLIILAI) form a helical membrane-spanning segment. Residues 51–58 (YSDPRLHT) lie on the Cytoplasmic side of the membrane. The chain crosses the membrane as a helical span at residues 59–80 (PMYFFLSNLSFMDICFTTVIVP). The Extracellular portion of the chain corresponds to 81–101 (KMLVNFLSETKIISYVGCLIQ). A disulfide bond links Cys-98 and Cys-190. A helical transmembrane segment spans residues 102-121 (MYFFMAFGNTDSYLLASMAI). Over 122–140 (DRLVAICNPLHYDVVMKPW) the chain is Cytoplasmic. The chain crosses the membrane as a helical span at residues 141 to 159 (HCLLMLLGSCSISHLHSLF). At 160–197 (RVLLMSRLSFCASHIIKHFFCDTQPVLKLSCSDTSSSQ) the chain is on the extracellular side. Residues 198–220 (MVVMTETLAVIVTPFLCTIFSYL) form a helical membrane-spanning segment. Residues 221–237 (QIIVTVLRIPSAAGKWK) lie on the Cytoplasmic side of the membrane. A helical transmembrane segment spans residues 238–260 (AFSTCGSHLTVVVLFYGSVIYVY). The Extracellular portion of the chain corresponds to 261–273 (FRPLSMYSVMKGR). Residues 274–293 (VATVMYTVVTPMLNPFIYSL) form a helical membrane-spanning segment. Over 294–311 (RNKDMKRGLKKLRHRIYS) the chain is Cytoplasmic.

This sequence belongs to the G-protein coupled receptor 1 family.

It localises to the cell membrane. In terms of biological role, odorant receptor. This is Olfactory receptor 1L4 (OR1L4) from Homo sapiens (Human).